Consider the following 430-residue polypeptide: Chaperone SurA (430 aa).

The signal sequence occupies residues 1–25 (MQIIKTTIATFTAIAFTGAASFTSA). PpiC domains follow at residues 176–277 (SPDY…KLYE) and 286–385 (VNQT…KVEE).

It is found in the periplasm. It catalyses the reaction [protein]-peptidylproline (omega=180) = [protein]-peptidylproline (omega=0). Functionally, chaperone involved in the correct folding and assembly of outer membrane proteins. Recognizes specific patterns of aromatic residues and the orientation of their side chains, which are found more frequently in integral outer membrane proteins. May act in both early periplasmic and late outer membrane-associated steps of protein maturation. The protein is Chaperone SurA of Saccharophagus degradans (strain 2-40 / ATCC 43961 / DSM 17024).